The primary structure comprises 397 residues: P-selectin glycoprotein ligand 1 (397 aa).

A signal peptide spans 1–17 (MSPSFLVLLTILGPGNS). Residues 18-41 (LQLQDPWGHETKEAPGPVHLRERR) constitute a propeptide that is removed on maturation. Residues 18–307 (LQLQDPWGHE…SSDLIPVKQC (290 aa)) are Extracellular-facing. A Sulfotyrosine modification is found at Tyr54. Thr58 is a glycosylation site (O-linked (GalNAc...) threonine). Asn66 is a glycosylation site (N-linked (GlcNAc...) asparagine). A disordered region spans residues 89–261 (TSAGTSERAT…TMETASTESN (173 aa)). A compositionally biased stretch (polar residues) spans 120-198 (STDSATQWSL…PMEAETSQPA (79 aa)). A run of 10 repeats spans residues 126 to 135 (QWSLTSVETV), 136 to 145 (QPASTEVETS), 146 to 155 (QPAPMEAETS), 156 to 165 (QPAPMEAETS), 166 to 175 (QPAPMEAETS), 176 to 185 (QPAPMEADTS), 186 to 195 (QPAPMEAETS), 196 to 205 (QPAPNEAETS), 206 to 215 (KPAPTEAETS), and 216 to 225 (KPAPTEAETT). The tract at residues 126-225 (QWSLTSVETV…KPAPTEAETT (100 aa)) is 10 X 10 AA tandem repeats. Residues 236–261 (LFTTSAATEVPSTEPTTMETASTESN) are compositionally biased toward polar residues. N-linked (GlcNAc...) asparagine glycosylation occurs at Asn261. A helical membrane pass occupies residues 308–328 (LLIILILASLATIFLVCTVVL). At 329–397 (AVRLSRKTHM…DDLTLHSFLP (69 aa)) the chain is on the cytoplasmic side. Residues 364-390 (PVTANGGLPKVQDLKTEPSGDRDGDDL) form a disordered region. Positions 375–390 (QDLKTEPSGDRDGDDL) are enriched in basic and acidic residues. Thr391 carries the phosphothreonine modification. At Ser394 the chain carries Phosphoserine.

In terms of assembly, homodimer; disulfide-linked. Interacts with P- and E-selectins, through their lectin/EGF domains. Interaction with P-selectin requires sialyl Lewis X glycan modification and tyrosine sulfation, probably on Tyr-54, for high affinity binding. Dimerization appears not to be required for P-selectin/SELP binding. Interacts with SNX20. Interacts with MSN and SYK; mediates SYK activation downstream of SELPLG. Interacts with HAVCR1. In terms of processing, displays complex, core-2, sialylated and fucosylated O-linked oligosaccharides, at least some of which appear to contain poly-N-acetyllactosamine with varying degrees of substitution. Mainly disialylated or neutral forms of the core-2 tetrasaccharide, Galbeta1--&gt;4GlcNAcbeta1--&gt;6(Galbeta1--&gt;3)GalNAcOH. The GlcN:GalN ratio is approximately 2:1 and the Man:Fuc ratio 3:5. Contains about 14% fucose with alpha-1,3 linkage present in two forms: One species is a disialylated, monofucosylated glycan, and the other, a monosialylated, trifucosylated glycan with a polylactosamine backbone. The fucosylated forms carry the Lewis antigen and are important for interaction with selectins and for functioning. No sulfated O-glycans. Some N-glycosylation. Highly expressed in blood, bone marrow, brain, adipose tissue, spleen, and thymus. Also expressed in heart, kidney, liver, muscle, ovary, and stomach.

The protein localises to the cell membrane. In terms of biological role, a SLe(x)-type proteoglycan, which through high affinity, calcium-dependent interactions with E- and P-selectins, mediates rapid rolling of leukocytes over vascular surfaces during the initial steps in inflammation. Critical for the initial leukocyte capture. This chain is P-selectin glycoprotein ligand 1 (Selplg), found in Mus musculus (Mouse).